Reading from the N-terminus, the 143-residue chain is Transcriptional regulator MraZ (143 aa).

SpoVT-AbrB domains lie at glutamate 5–valine 47 and alanine 76–arginine 119.

Belongs to the MraZ family. As to quaternary structure, forms oligomers.

The protein localises to the cytoplasm. Its subcellular location is the nucleoid. This chain is Transcriptional regulator MraZ, found in Herpetosiphon aurantiacus (strain ATCC 23779 / DSM 785 / 114-95).